A 427-amino-acid chain; its full sequence is UDP-N-acetylglucosamine 1-carboxyvinyltransferase (427 aa).

22–23 (KN) is a phosphoenolpyruvate binding site. Arg92 lines the UDP-N-acetyl-alpha-D-glucosamine pocket. Asp116 serves as the catalytic Proton donor. Positions 312 and 334 each coordinate UDP-N-acetyl-alpha-D-glucosamine.

This sequence belongs to the EPSP synthase family. MurA subfamily.

Its subcellular location is the cytoplasm. The catalysed reaction is phosphoenolpyruvate + UDP-N-acetyl-alpha-D-glucosamine = UDP-N-acetyl-3-O-(1-carboxyvinyl)-alpha-D-glucosamine + phosphate. It functions in the pathway cell wall biogenesis; peptidoglycan biosynthesis. Functionally, cell wall formation. Adds enolpyruvyl to UDP-N-acetylglucosamine. The chain is UDP-N-acetylglucosamine 1-carboxyvinyltransferase from Borrelia garinii subsp. bavariensis (strain ATCC BAA-2496 / DSM 23469 / PBi) (Borreliella bavariensis).